We begin with the raw amino-acid sequence, 425 residues long: L-cysteine:1D-myo-inositol 2-amino-2-deoxy-alpha-D-glucopyranoside ligase (425 aa).

Cys43 provides a ligand contact to Zn(2+). L-cysteinyl-5'-AMP-binding positions include 43 to 46 (CGIT), Thr58, and 81 to 83 (NVT). Residues 45–55 (ITPYDATHIGH) carry the 'HIGH' region motif. A 'ERGGDP' region motif is present at residues 195–200 (ERGGDP). Position 236 (Trp236) interacts with L-cysteinyl-5'-AMP. Zn(2+) is bound at residue Cys240. 258 to 260 (GSD) is a binding site for L-cysteinyl-5'-AMP. His265 serves as a coordination point for Zn(2+). Val295 contacts L-cysteinyl-5'-AMP. Positions 301–305 (KMSKS) match the 'KMSKS' region motif.

It belongs to the class-I aminoacyl-tRNA synthetase family. MshC subfamily. In terms of assembly, monomer. Requires Zn(2+) as cofactor.

It catalyses the reaction 1D-myo-inositol 2-amino-2-deoxy-alpha-D-glucopyranoside + L-cysteine + ATP = 1D-myo-inositol 2-(L-cysteinylamino)-2-deoxy-alpha-D-glucopyranoside + AMP + diphosphate + H(+). Functionally, catalyzes the ATP-dependent condensation of GlcN-Ins and L-cysteine to form L-Cys-GlcN-Ins. The polypeptide is L-cysteine:1D-myo-inositol 2-amino-2-deoxy-alpha-D-glucopyranoside ligase (Sanguibacter keddieii (strain ATCC 51767 / DSM 10542 / NCFB 3025 / ST-74)).